The chain runs to 643 residues: Melanoma-associated antigen C3 (643 aa).

2 consecutive MAGE domains span residues 184-384 (LDEK…AAGM) and 456-643 (LDEK…FCPE). The tract at residues 347–421 (NPQGLAGHRQ…PQSPLDSCSS (75 aa)) is disordered. Positions 354 to 363 (HRQEDGRRGL) are enriched in basic and acidic residues. The segment covering 383-414 (GMPPLPQSPPEIPPQGPPKISPQGPPQSPPQS) has biased composition (pro residues). Phosphothreonine is present on residues Thr478, Thr484, and Thr485.

As to expression, expressed in testis. Not expressed in other normal tissues, but is expressed in tumors of different histological origins.

In Homo sapiens (Human), this protein is Melanoma-associated antigen C3 (MAGEC3).